We begin with the raw amino-acid sequence, 250 residues long: Beta-lactamase HcpA (250 aa).

Positions 1–25 (MLGSVKKTLFGVLCLGALCLRGLMA) are cleaved as a signal peptide. 5 TPR repeats span residues 29–62 (AKELVSLGIESVKKQDFAQAKAHFEKACELKEGF), 67–98 (LGAFYEEGKGVGKDLKKAIQFYTKGCELNDGY), 100–133 (CRLLGNLYYNGQGVSKDAKKASQYYSKSCELNHA), 134–169 (EGCTVLGSLHHYGVGTPKDLRKALDLYEKACDLKDS), and 170–202 (PGCINAGYMYGVAKNFKEAIVRYSKACELKDGR). Intrachain disulfides connect cysteine 56-cysteine 64, cysteine 92-cysteine 100, cysteine 128-cysteine 136, cysteine 164-cysteine 172, cysteine 196-cysteine 204, and cysteine 232-cysteine 240.

This sequence belongs to the hcp beta-lactamase family.

The protein localises to the secreted. The enzyme catalyses a beta-lactam + H2O = a substituted beta-amino acid. With respect to regulation, inhibited by cloxacillin and oxacillin but not by ACA derivatives or metal chelators. Slowly hydrolyzes 6-aminopenicillinic acid and 7-aminocephalosporanic acid (ACA) derivatives. May be involved in the synthesis of the cell wall peptidoglycan. In Helicobacter pylori (strain J99 / ATCC 700824) (Campylobacter pylori J99), this protein is Beta-lactamase HcpA (hcpA).